We begin with the raw amino-acid sequence, 348 residues long: MKPPARMVSPERRSDDVGDTALRPQQLSEFVGQQQARANLSIFIEAARKRGEALDHVLFVGPPGLGKTTLAQIVARELGVGFRATSGPVIAKAGDLAALLTNLEERDVLFIDEIHRLSPAVEEVLYPAMEDFQLDLIIGEGPAARSVKIDLSKFTLVGATTRAGLLTNPLRDRFGIPIRLNFYTVEELEGIVTRGARVLGIGMTPDGANEIARRARGTPRIAGRLLRRVRDFASAADASAIDRAIADHALSALEVDAAGLDAMDRRYLSTIALNYGGGPVGVETMAAALSEPRDAIEDIIEPYLIQCGYLQRTPRGRLLTSHAFKHLGMAEPANRDPSQIGLFGNDDD.

A disordered region spans residues 1–20 (MKPPARMVSPERRSDDVGDT). Residues 1-183 (MKPPARMVSP…FGIPIRLNFY (183 aa)) form a large ATPase domain (RuvB-L) region. ATP-binding positions include Leu22, Arg23, Gly64, Lys67, Thr68, Thr69, 130–132 (EDF), Arg173, Tyr183, and Arg220. Residue Thr68 participates in Mg(2+) binding. Residues 184-254 (TVEELEGIVT…IADHALSALE (71 aa)) are small ATPAse domain (RuvB-S). The interval 257–348 (AAGLDAMDRR…QIGLFGNDDD (92 aa)) is head domain (RuvB-H). Residues Arg293, Arg312, and Arg317 each coordinate DNA.

It belongs to the RuvB family. In terms of assembly, homohexamer. Forms an RuvA(8)-RuvB(12)-Holliday junction (HJ) complex. HJ DNA is sandwiched between 2 RuvA tetramers; dsDNA enters through RuvA and exits via RuvB. An RuvB hexamer assembles on each DNA strand where it exits the tetramer. Each RuvB hexamer is contacted by two RuvA subunits (via domain III) on 2 adjacent RuvB subunits; this complex drives branch migration. In the full resolvosome a probable DNA-RuvA(4)-RuvB(12)-RuvC(2) complex forms which resolves the HJ.

It localises to the cytoplasm. It carries out the reaction ATP + H2O = ADP + phosphate + H(+). The RuvA-RuvB-RuvC complex processes Holliday junction (HJ) DNA during genetic recombination and DNA repair, while the RuvA-RuvB complex plays an important role in the rescue of blocked DNA replication forks via replication fork reversal (RFR). RuvA specifically binds to HJ cruciform DNA, conferring on it an open structure. The RuvB hexamer acts as an ATP-dependent pump, pulling dsDNA into and through the RuvAB complex. RuvB forms 2 homohexamers on either side of HJ DNA bound by 1 or 2 RuvA tetramers; 4 subunits per hexamer contact DNA at a time. Coordinated motions by a converter formed by DNA-disengaged RuvB subunits stimulates ATP hydrolysis and nucleotide exchange. Immobilization of the converter enables RuvB to convert the ATP-contained energy into a lever motion, pulling 2 nucleotides of DNA out of the RuvA tetramer per ATP hydrolyzed, thus driving DNA branch migration. The RuvB motors rotate together with the DNA substrate, which together with the progressing nucleotide cycle form the mechanistic basis for DNA recombination by continuous HJ branch migration. Branch migration allows RuvC to scan DNA until it finds its consensus sequence, where it cleaves and resolves cruciform DNA. This chain is Holliday junction branch migration complex subunit RuvB, found in Bradyrhizobium sp. (strain ORS 278).